We begin with the raw amino-acid sequence, 192 residues long: Pyridoxal 5'-phosphate synthase subunit PdxT (192 aa).

53–55 (GES) is a binding site for L-glutamine. Residue C82 is the Nucleophile of the active site. L-glutamine-binding positions include R108 and 134 to 135 (IR). Active-site charge relay system residues include H170 and E172.

Belongs to the glutaminase PdxT/SNO family. In terms of assembly, in the presence of PdxS, forms a dodecamer of heterodimers. Only shows activity in the heterodimer.

The catalysed reaction is aldehydo-D-ribose 5-phosphate + D-glyceraldehyde 3-phosphate + L-glutamine = pyridoxal 5'-phosphate + L-glutamate + phosphate + 3 H2O + H(+). It catalyses the reaction L-glutamine + H2O = L-glutamate + NH4(+). It functions in the pathway cofactor biosynthesis; pyridoxal 5'-phosphate biosynthesis. Its function is as follows. Catalyzes the hydrolysis of glutamine to glutamate and ammonia as part of the biosynthesis of pyridoxal 5'-phosphate. The resulting ammonia molecule is channeled to the active site of PdxS. This chain is Pyridoxal 5'-phosphate synthase subunit PdxT, found in Methanothermobacter thermautotrophicus (strain ATCC 29096 / DSM 1053 / JCM 10044 / NBRC 100330 / Delta H) (Methanobacterium thermoautotrophicum).